Consider the following 694-residue polypeptide: MAREYKIEDYRNFGIMAHIDAGKTTMTERILFYTGKNHKIGETHDGASTMDWMEQEQERGITITSAATTTFWQGRDGKKRRFNIIDTPGHVDFTIEVERSLRVLDGAIALLDANAGVEPQTETVWRQAEKYHVPRMVFVNKMDKIGADFYRSVEMVGSRLGAVALPVQLPIGAENDFVGVVDLIEMKALTWDGTIGAPATVGEIPADMADKAEEYREKLIELAVEIDEAAMEAYLEGTMPTNDELRALIRKGTIEVKFHPILCGTAFKNRGVQPLLDAVVEFLPAPTDVPAIKGIDVKTETETTRESSDEAPLSMLAFKIMNDPFVGSLTFTRIYSGKLTKGVSLENTVKGKRERIGRMLQMHSNSREDIDEAFAGDIVALAGLKETTTGDTLCDPLKPVILERMEFPDPVIEIAIEPKTKADQEKMGIALNRLAAEDPSFRVKSDEESGQTIIAGMGELHLDILVDRMKREFKVEANVGAPQVAYRESITRAAEIDYTHKKQSGGSGQFARVKIIFEPHDGDDFIFESKIVGGSVPKEYIPGVQKGIESVMGAGPLAGFPMLGVKATLIDGAYHDVDSSVLAFEIASRAAFREGAQKAGAQLLEPIMKVEVVTPEDYVGDVIGDLNSRRGQISGTEARGIATVVNAMVPLANMFGYVNSLRSMSQGRAQYTMQFDHYEPVPTAVAQEIQKKFA.

The tr-type G domain maps to 8–287 (EDYRNFGIMA…AVVEFLPAPT (280 aa)). GTP contacts are provided by residues 17 to 24 (AHIDAGKT), 86 to 90 (DTPGH), and 140 to 143 (NKMD).

Belongs to the TRAFAC class translation factor GTPase superfamily. Classic translation factor GTPase family. EF-G/EF-2 subfamily.

The protein localises to the cytoplasm. Catalyzes the GTP-dependent ribosomal translocation step during translation elongation. During this step, the ribosome changes from the pre-translocational (PRE) to the post-translocational (POST) state as the newly formed A-site-bound peptidyl-tRNA and P-site-bound deacylated tRNA move to the P and E sites, respectively. Catalyzes the coordinated movement of the two tRNA molecules, the mRNA and conformational changes in the ribosome. This chain is Elongation factor G, found in Brucella melitensis biotype 1 (strain ATCC 23456 / CCUG 17765 / NCTC 10094 / 16M).